The following is a 236-amino-acid chain: LexA repressor (236 aa).

Residues 1 to 25 are disordered; that stretch reads MNDSNDTSVAGGAAGADSRVLSADS. The H-T-H motif DNA-binding region spans 51-71; that stretch reads IREIGDAVGLTSTSSVAHQLR. Active-site for autocatalytic cleavage activity residues include serine 160 and lysine 197.

It belongs to the peptidase S24 family. As to quaternary structure, homodimer.

It catalyses the reaction Hydrolysis of Ala-|-Gly bond in repressor LexA.. Represses a number of genes involved in the response to DNA damage (SOS response), including recA and lexA. In the presence of single-stranded DNA, RecA interacts with LexA causing an autocatalytic cleavage which disrupts the DNA-binding part of LexA, leading to derepression of the SOS regulon and eventually DNA repair. This Mycobacterium tuberculosis (strain ATCC 25177 / H37Ra) protein is LexA repressor.